The sequence spans 328 residues: Probable nicotianamine synthase 6 (328 aa).

The protein belongs to the nicotianamine synthase (NAS)-like family.

The enzyme catalyses 3 S-adenosyl-L-methionine = nicotianamine + 3 S-methyl-5'-thioadenosine + 3 H(+). Functionally, synthesizes nicotianamine, a polyamine that is the first intermediate in the synthesis of the phytosiderophores of the mugineic acid type found in gramineae which serves as a sensor for the physiological iron status within the plant, and/or might be involved in the transport of iron. In Hordeum vulgare (Barley), this protein is Probable nicotianamine synthase 6 (NAS6).